The following is a 397-amino-acid chain: Succinate--CoA ligase [ADP-forming] subunit beta (397 aa).

The ATP-grasp domain occupies 9-254 (KALLKGYGAP…ETEEDAKEIE (246 aa)). ATP contacts are provided by residues Lys-46, 53–55 (GRG), Glu-109, Ala-112, and Glu-117. Mg(2+)-binding residues include Asn-209 and Asp-223. Substrate-binding positions include Asn-274 and 331–333 (GIM).

It belongs to the succinate/malate CoA ligase beta subunit family. Heterotetramer of two alpha and two beta subunits. Mg(2+) serves as cofactor.

It carries out the reaction succinate + ATP + CoA = succinyl-CoA + ADP + phosphate. The catalysed reaction is GTP + succinate + CoA = succinyl-CoA + GDP + phosphate. It functions in the pathway carbohydrate metabolism; tricarboxylic acid cycle; succinate from succinyl-CoA (ligase route): step 1/1. Its function is as follows. Succinyl-CoA synthetase functions in the citric acid cycle (TCA), coupling the hydrolysis of succinyl-CoA to the synthesis of either ATP or GTP and thus represents the only step of substrate-level phosphorylation in the TCA. The beta subunit provides nucleotide specificity of the enzyme and binds the substrate succinate, while the binding sites for coenzyme A and phosphate are found in the alpha subunit. This Rhizobium etli (strain ATCC 51251 / DSM 11541 / JCM 21823 / NBRC 15573 / CFN 42) protein is Succinate--CoA ligase [ADP-forming] subunit beta.